The chain runs to 336 residues: F-box protein At5g50450 (336 aa).

One can recognise an F-box domain in the interval 19–70 (NNHFEDLHDDLIISILRKLATSASSPSDFLTVLSTCKRLNRLGLHPLVLSKA). Zn(2+) is bound by residues His-263, Cys-266, Cys-279, Cys-282, Cys-288, Cys-292, His-301, and Cys-305. Residues 263–305 (HGGCGRPETRAHEFRRCSVCGKVNYCSRGCQALDWRAKHKVEC) form an MYND-type; atypical zinc finger.

This chain is F-box protein At5g50450, found in Arabidopsis thaliana (Mouse-ear cress).